Consider the following 257-residue polypeptide: Outer membrane protein YaiO (257 aa).

Positions 1-19 are cleaved as a signal peptide; the sequence is MIKRTLLAAAIFSALPAYA.

The protein localises to the cell outer membrane. The protein is Outer membrane protein YaiO (yaiO) of Escherichia coli (strain K12).